The following is a 468-amino-acid chain: Zinc finger protein 672 (468 aa).

4 C2H2-type zinc fingers span residues 15–37 (YSCSVCGKSFQYSAVLLRHERAH), 43–65 (FRCLECGERCARASDLRVHRWTH), 71–93 (YICSECGQSFSHSSLLDLHLGTH), and 100–123 (CPCRLCGRRFPHVSALLLHRVRQH). The C2H2-type 5; degenerate zinc finger occupies 129-151 (HRCPLCARSFRQSALPFHLARAH). C2H2-type zinc fingers lie at residues 167-189 (YHCTQCPRAFHSSAGLRNHSRIH), 202-224 (HRCGVCGKSFSKSSTLTRHLQRH), 230-252 (FKCPECGKGFLESATLVRHQRTH), 258-280 (YACNDCGRCFSESSTLLRHQRSH), 286-308 (HICATCGKGFGQRYDLVVHQRSH), 314-336 (FPCPECGRGFTDRSDLTKHLRTH), 342-364 (YHCELCGKRFTCISNLNVHLRNH), 370-392 (HKCPECGKSFSVASKLALHRKTH), and 398-420 (AECTECGKFFSHGRSLSQHQRSH).

It belongs to the krueppel C2H2-type zinc-finger protein family.

It is found in the nucleus. Functionally, may be involved in transcriptional regulation. The sequence is that of Zinc finger protein 672 (Znf672) from Rattus norvegicus (Rat).